The sequence spans 294 residues: Nucleoside-specific channel-forming protein Tsx (294 aa).

Positions 1-22 (MKKTLLAAGAVVALSTTFAAGA) are cleaved as a signal peptide.

This sequence belongs to the nucleoside-specific channel-forming outer membrane porin (Tsx) (TC 1.B.10) family.

The protein resides in the cell outer membrane. Functionally, functions as a substrate-specific channel for nucleosides and deoxynucleosides. Also functions in albicidin uptake and as receptor for colicin K. Also is a receptor for several Tsx-specific bacteriophages. The chain is Nucleoside-specific channel-forming protein Tsx from Klebsiella pneumoniae.